The sequence spans 383 residues: 8-amino-7-oxononanoate synthase (383 aa).

Residue Arg-21 participates in substrate binding. 108–109 serves as a coordination point for pyridoxal 5'-phosphate; the sequence is GY. His-133 provides a ligand contact to substrate. Ser-179, His-207, and Thr-233 together coordinate pyridoxal 5'-phosphate. Lys-236 is modified (N6-(pyridoxal phosphate)lysine). A substrate-binding site is contributed by Thr-350.

Belongs to the class-II pyridoxal-phosphate-dependent aminotransferase family. BioF subfamily. As to quaternary structure, homodimer. The cofactor is pyridoxal 5'-phosphate.

The enzyme catalyses 6-carboxyhexanoyl-[ACP] + L-alanine + H(+) = (8S)-8-amino-7-oxononanoate + holo-[ACP] + CO2. It participates in cofactor biosynthesis; biotin biosynthesis. Its function is as follows. Catalyzes the decarboxylative condensation of pimeloyl-[acyl-carrier protein] and L-alanine to produce 8-amino-7-oxononanoate (AON), [acyl-carrier protein], and carbon dioxide. This is 8-amino-7-oxononanoate synthase from Yersinia pseudotuberculosis serotype IB (strain PB1/+).